Reading from the N-terminus, the 374-residue chain is tRNA-specific 2-thiouridylase MnmA (374 aa).

ATP is bound by residues 13–20 (GMSGGVDS) and M39. The interval 99–101 (NPD) is interaction with target base in tRNA. The active-site Nucleophile is C104. The cysteines at positions 104 and 201 are disulfide-linked. G128 lines the ATP pocket. An interaction with tRNA region spans residues 151–153 (KDQ). C201 acts as the Cysteine persulfide intermediate in catalysis. The interval 313–314 (RY) is interaction with tRNA.

It belongs to the MnmA/TRMU family.

Its subcellular location is the cytoplasm. The catalysed reaction is S-sulfanyl-L-cysteinyl-[protein] + uridine(34) in tRNA + AH2 + ATP = 2-thiouridine(34) in tRNA + L-cysteinyl-[protein] + A + AMP + diphosphate + H(+). Functionally, catalyzes the 2-thiolation of uridine at the wobble position (U34) of tRNA, leading to the formation of s(2)U34. The polypeptide is tRNA-specific 2-thiouridylase MnmA (Streptococcus suis (strain 98HAH33)).